Consider the following 532-residue polypeptide: Glucose-6-phosphate isomerase (532 aa).

Catalysis depends on glutamate 330, which acts as the Proton donor. Residues histidine 359 and lysine 461 contribute to the active site.

It belongs to the GPI family.

Its subcellular location is the cytoplasm. The catalysed reaction is alpha-D-glucose 6-phosphate = beta-D-fructose 6-phosphate. It participates in carbohydrate biosynthesis; gluconeogenesis. It functions in the pathway carbohydrate degradation; glycolysis; D-glyceraldehyde 3-phosphate and glycerone phosphate from D-glucose: step 2/4. Functionally, catalyzes the reversible isomerization of glucose-6-phosphate to fructose-6-phosphate. In Synechococcus sp. (strain CC9902), this protein is Glucose-6-phosphate isomerase.